A 687-amino-acid chain; its full sequence is Chloride channel protein ClC-Kb (687 aa).

Topologically, residues 1–50 (MEEIVGLREGSPRKPVPLQELWRPCPRIRRNIQGSLEWLKERLFRVGEDW) are cytoplasmic. A run of 2 helical transmembrane segments spans residues 51–82 (YFLV…KWLY) and 91–111 (LRYL…SGFS). The helical intramembrane region spans 116-127 (PSSGGSGIPEVK). A chloride-binding site is contributed by S121. 2 helical membrane-spanning segments follow: residues 141 to 160 (IKNF…TGST) and 161 to 180 (IFLG…AAYL). A glycan (N-linked (GlcNAc...) asparagine) is linked at N193. Positions 203-224 (AGAAVGVATVFAAPISGVLFSI) form an intramembrane region, helical. The chain crosses the membrane as a helical span at residues 236–255 (YWRGFFAATCGAFMFHLLAV). Residues E259, E261, D278, and E281 each coordinate Ca(2+). 2 consecutive transmembrane segments (helical) span residues 282–310 (IFFF…LFFL) and 325–342 (PLYS…TYPP). Positions 349–360 (ASRLSMSEYLET) form an intramembrane region, helical. The next 2 membrane-spanning stretches (helical) occupy residues 400-420 (GTLV…TTIP) and 421-440 (IPAG…GRLF). F426 is a chloride binding site. An intramembrane region (helical) is located at residues 464–496 (GAYALAGAAAFSGAVTHTLSTALLAFEVSGQIV). The helical transmembrane segment at 500 to 520 (PVLMAVLAANAICQSYQPSFY) threads the bilayer. Over 521-687 (DGTIIVKKLP…STLTNPPAPK (167 aa)) the chain is Cytoplasmic. 2 CBS domains span residues 551-609 (MNCT…DSAS) and 626-687 (CPTQ…PAPK).

Belongs to the chloride channel (TC 2.A.49) family. CLCNKB subfamily. In terms of assembly, homodimer. Interacts with BSND. Post-translationally, N-glycosylated. In terms of tissue distribution, expressed predominantly in the kidney. Expressed in all segments of the nephron examined, including the S2 segment and the glomerulus.

The protein localises to the basolateral cell membrane. The catalysed reaction is chloride(in) = chloride(out). The enzyme catalyses iodide(out) = iodide(in). It catalyses the reaction nitrate(in) = nitrate(out). It carries out the reaction bromide(in) = bromide(out). Anion-selective channel permeable to small monovalent anions with ion selectivity for chloride &gt; bromide &gt; nitrate &gt; iodide. Forms a homodimeric channel where each subunit has its own ion conduction pathway. May conduct double-barreled currents controlled by two types of gates, two fast gates that control each subunit independently and a slow common gate that opens and shuts off both subunits simultaneously. Assembles with the regulatory subunit BSND/Barttin for sorting at the basolateral plasma membrane domain and functional switch to the ion conducting state. CLCNKB:BSND channels display mostly a linear current-voltage relationship controlled by common gate. Mediates chloride conductance along nephron segments, namely the thick ascending limb of Henle's loop, convoluted tubule and the collecting duct, contributing to the maintenance of systemic acid-base and electrolyte homeostasis. Conducts chloride currents in the stria vascularis of the inner ear to establish the endocochlear potential necessary for normal hearing. The sequence is that of Chloride channel protein ClC-Kb from Rattus norvegicus (Rat).